The primary structure comprises 410 residues: TNF receptor-associated factor family protein DDB_G0279745 (410 aa).

The segment at 27 to 67 adopts an RING-type; degenerate zinc-finger fold; it reads CVICSFPLFDGLQCKRGHGACKSCWEKIIGENGKKECHSCR. 2 consecutive TRAF-type zinc fingers follow at residues 81–154 and 154–213; these read YLEK…SLEQ and QHQN…DESI. A coiled-coil region spans residues 216 to 284; the sequence is LSNSIVEIQK…SMINKLDDSA (69 aa).

This sequence belongs to the TNF receptor-associated factor family.

The protein resides in the cytoplasm. Probable adapter protein and signal transducer that links members of the tumor necrosis factor receptor family to different signaling pathways by association with the receptor cytoplasmic domain and kinases. The sequence is that of TNF receptor-associated factor family protein DDB_G0279745 from Dictyostelium discoideum (Social amoeba).